We begin with the raw amino-acid sequence, 162 residues long: Transcription antitermination protein RfaH (162 aa).

Belongs to the RfaH family. Interacts with both the nontemplate DNA and the RNA polymerase (RNAP).

Functionally, enhances distal genes transcription elongation in a specialized subset of operons that encode extracytoplasmic components. RfaH is recruited into a multi-component RNA polymerase complex by the ops element, which is a short conserved DNA sequence located downstream of the main promoter of these operons. Once bound, RfaH suppresses pausing and inhibits Rho-dependent and intrinsic termination at a subset of sites. Termination signals are bypassed, which allows complete synthesis of long RNA chains. Also negatively controls expression and surface presentation of AG43 and possibly another AG43-independent factor that mediates cell-cell interactions and biofilm formation,. The protein is Transcription antitermination protein RfaH of Escherichia coli O6:K15:H31 (strain 536 / UPEC).